Reading from the N-terminus, the 477-residue chain is Ribulose bisphosphate carboxylase large chain (477 aa).

Positions 1–2 are excised as a propeptide; that stretch reads MS. Pro3 carries the post-translational modification N-acetylproline. Substrate contacts are provided by Asn123 and Thr173. Lys175 serves as the catalytic Proton acceptor. Lys177 contributes to the substrate binding site. Residues Lys201, Asp203, and Glu204 each contribute to the Mg(2+) site. At Lys201 the chain carries N6-carboxylysine. The active-site Proton acceptor is the His294. Substrate is bound by residues Arg295, His327, and Ser379.

The protein belongs to the RuBisCO large chain family. Type I subfamily. In terms of assembly, heterohexadecamer of 8 large chains and 8 small chains; disulfide-linked. The disulfide link is formed within the large subunit homodimers. Mg(2+) is required as a cofactor. Post-translationally, the disulfide bond which can form in the large chain dimeric partners within the hexadecamer appears to be associated with oxidative stress and protein turnover.

The protein resides in the plastid. Its subcellular location is the chloroplast. The enzyme catalyses 2 (2R)-3-phosphoglycerate + 2 H(+) = D-ribulose 1,5-bisphosphate + CO2 + H2O. It carries out the reaction D-ribulose 1,5-bisphosphate + O2 = 2-phosphoglycolate + (2R)-3-phosphoglycerate + 2 H(+). Functionally, ruBisCO catalyzes two reactions: the carboxylation of D-ribulose 1,5-bisphosphate, the primary event in carbon dioxide fixation, as well as the oxidative fragmentation of the pentose substrate in the photorespiration process. Both reactions occur simultaneously and in competition at the same active site. The chain is Ribulose bisphosphate carboxylase large chain from Avena sativa (Oat).